A 386-amino-acid chain; its full sequence is Succinate--CoA ligase [ADP-forming] subunit beta (386 aa).

The ATP-grasp domain maps to 9–244 (KEILRKYGVP…HDEEDPLETR (236 aa)). ATP is bound by residues lysine 46, 53 to 55 (GRG), glutamate 99, cysteine 102, and glutamate 107. Mg(2+) contacts are provided by asparagine 199 and aspartate 213. Residues asparagine 264 and 321–323 (GIM) each bind substrate.

This sequence belongs to the succinate/malate CoA ligase beta subunit family. Heterotetramer of two alpha and two beta subunits. It depends on Mg(2+) as a cofactor.

The catalysed reaction is succinate + ATP + CoA = succinyl-CoA + ADP + phosphate. It catalyses the reaction GTP + succinate + CoA = succinyl-CoA + GDP + phosphate. It participates in carbohydrate metabolism; tricarboxylic acid cycle; succinate from succinyl-CoA (ligase route): step 1/1. Its function is as follows. Succinyl-CoA synthetase functions in the citric acid cycle (TCA), coupling the hydrolysis of succinyl-CoA to the synthesis of either ATP or GTP and thus represents the only step of substrate-level phosphorylation in the TCA. The beta subunit provides nucleotide specificity of the enzyme and binds the substrate succinate, while the binding sites for coenzyme A and phosphate are found in the alpha subunit. The chain is Succinate--CoA ligase [ADP-forming] subunit beta from Rickettsia typhi (strain ATCC VR-144 / Wilmington).